Reading from the N-terminus, the 264-residue chain is Thymidylate synthase (264 aa).

DUMP is bound at residue Arg21. Position 51 (His51) interacts with (6R)-5,10-methylene-5,6,7,8-tetrahydrofolate. A dUMP-binding site is contributed by 126–127 (RR). Cys146 acts as the Nucleophile in catalysis. Residues 166-169 (RSAD), Asn177, and 207-209 (HIY) each bind dUMP. Asp169 contacts (6R)-5,10-methylene-5,6,7,8-tetrahydrofolate. Ala263 is a binding site for (6R)-5,10-methylene-5,6,7,8-tetrahydrofolate.

This sequence belongs to the thymidylate synthase family. Bacterial-type ThyA subfamily. In terms of assembly, homodimer.

The protein resides in the cytoplasm. The enzyme catalyses dUMP + (6R)-5,10-methylene-5,6,7,8-tetrahydrofolate = 7,8-dihydrofolate + dTMP. The protein operates within pyrimidine metabolism; dTTP biosynthesis. Its function is as follows. Catalyzes the reductive methylation of 2'-deoxyuridine-5'-monophosphate (dUMP) to 2'-deoxythymidine-5'-monophosphate (dTMP) while utilizing 5,10-methylenetetrahydrofolate (mTHF) as the methyl donor and reductant in the reaction, yielding dihydrofolate (DHF) as a by-product. This enzymatic reaction provides an intracellular de novo source of dTMP, an essential precursor for DNA biosynthesis. This Bacteroides thetaiotaomicron (strain ATCC 29148 / DSM 2079 / JCM 5827 / CCUG 10774 / NCTC 10582 / VPI-5482 / E50) protein is Thymidylate synthase.